Reading from the N-terminus, the 255-residue chain is Glutamate racemase (255 aa).

Substrate contacts are provided by residues 7–8 (DS) and 39–40 (YG). Cys70 acts as the Proton donor/acceptor in catalysis. 71–72 (NT) contributes to the substrate binding site. The Proton donor/acceptor role is filled by Cys181. 182–183 (TH) serves as a coordination point for substrate.

This sequence belongs to the aspartate/glutamate racemases family.

It carries out the reaction L-glutamate = D-glutamate. It participates in cell wall biogenesis; peptidoglycan biosynthesis. Its function is as follows. Provides the (R)-glutamate required for cell wall biosynthesis. The chain is Glutamate racemase from Helicobacter pylori (strain Shi470).